The chain runs to 447 residues: Ribosomal protein uS12 methylthiotransferase RimO (447 aa).

Residues 15–125 (PRVGFVSLGC…VMQAIHRHLP (111 aa)) form the MTTase N-terminal domain. 6 residues coordinate [4Fe-4S] cluster: Cys-24, Cys-60, Cys-89, Cys-156, Cys-160, and Cys-163. In terms of domain architecture, Radical SAM core spans 142–379 (LTPKHYAYLK…MQWQEEISKK (238 aa)). A TRAM domain is found at 379–447 (KRLAGKKGRI…GIHDLWAKKI (69 aa)).

Belongs to the methylthiotransferase family. RimO subfamily. It depends on [4Fe-4S] cluster as a cofactor.

It localises to the cytoplasm. The catalysed reaction is L-aspartate(89)-[ribosomal protein uS12]-hydrogen + (sulfur carrier)-SH + AH2 + 2 S-adenosyl-L-methionine = 3-methylsulfanyl-L-aspartate(89)-[ribosomal protein uS12]-hydrogen + (sulfur carrier)-H + 5'-deoxyadenosine + L-methionine + A + S-adenosyl-L-homocysteine + 2 H(+). In terms of biological role, catalyzes the methylthiolation of an aspartic acid residue of ribosomal protein uS12. This Nitrosomonas europaea (strain ATCC 19718 / CIP 103999 / KCTC 2705 / NBRC 14298) protein is Ribosomal protein uS12 methylthiotransferase RimO.